Here is a 152-residue protein sequence, read N- to C-terminus: UPF0225 protein YchJ (152 aa).

The protein belongs to the UPF0225 family.

The polypeptide is UPF0225 protein YchJ (Escherichia coli O6:K15:H31 (strain 536 / UPEC)).